The chain runs to 289 residues: Release factor glutamine methyltransferase (289 aa).

S-adenosyl-L-methionine contacts are provided by residues 122–126 (GVGSG), D145, W174, and N189. Substrate is bound at residue 189–192 (NPPY).

This sequence belongs to the protein N5-glutamine methyltransferase family. PrmC subfamily.

The catalysed reaction is L-glutaminyl-[peptide chain release factor] + S-adenosyl-L-methionine = N(5)-methyl-L-glutaminyl-[peptide chain release factor] + S-adenosyl-L-homocysteine + H(+). Methylates the class 1 translation termination release factors RF1/PrfA and RF2/PrfB on the glutamine residue of the universally conserved GGQ motif. The protein is Release factor glutamine methyltransferase of Caulobacter vibrioides (strain ATCC 19089 / CIP 103742 / CB 15) (Caulobacter crescentus).